A 213-amino-acid polypeptide reads, in one-letter code: ATP phosphoribosyltransferase (213 aa).

It belongs to the ATP phosphoribosyltransferase family. Short subfamily. In terms of assembly, heteromultimer composed of HisG and HisZ subunits.

It is found in the cytoplasm. It catalyses the reaction 1-(5-phospho-beta-D-ribosyl)-ATP + diphosphate = 5-phospho-alpha-D-ribose 1-diphosphate + ATP. Its pathway is amino-acid biosynthesis; L-histidine biosynthesis; L-histidine from 5-phospho-alpha-D-ribose 1-diphosphate: step 1/9. Its function is as follows. Catalyzes the condensation of ATP and 5-phosphoribose 1-diphosphate to form N'-(5'-phosphoribosyl)-ATP (PR-ATP). Has a crucial role in the pathway because the rate of histidine biosynthesis seems to be controlled primarily by regulation of HisG enzymatic activity. This Variovorax paradoxus (strain S110) protein is ATP phosphoribosyltransferase.